A 387-amino-acid chain; its full sequence is SpoIVD-associated factor A (387 aa).

The region spanning 2–47 (KIHIVQKGDSLWKIAEKYGVDVEEVKKLNTQLSNPDLIMPGMKIKV) is the LysM domain. Disordered stretches follow at residues 49–106 (SEGV…MPNL) and 355–387 (NPNPNPYSAGVSMPMTNQPSVNQMFGRPEEENE). The segment covering 70-96 (KQEHPYAKEKPKSVVDVEDTKPKEKKS) has biased composition (basic and acidic residues). Over residues 368-377 (PMTNQPSVNQ) the composition is skewed to polar residues.

It is found in the spore cortex. Its function is as follows. Probably involved in the assembly of some coat protein components implicated in both lysozyme resistance and germination. Could be required for the assembly of CotG. Associates with SpoIVD during the early stage of coat assembly. The protein is SpoIVD-associated factor A (safA) of Bacillus subtilis (strain 168).